Reading from the N-terminus, the 149-residue chain is Transcriptional repressor NrdR (149 aa).

A zinc finger spans residues 3–34 (CPFCGHLETQVVETRISEDAEFIRRRRQCGAC). The 91-residue stretch at 49 to 139 (PSIVKKDGRR…VYRSFEDIDE (91 aa)) folds into the ATP-cone domain.

It belongs to the NrdR family. It depends on Zn(2+) as a cofactor.

Its function is as follows. Negatively regulates transcription of bacterial ribonucleotide reductase nrd genes and operons by binding to NrdR-boxes. The polypeptide is Transcriptional repressor NrdR (Polaromonas naphthalenivorans (strain CJ2)).